The chain runs to 148 residues: UPF0260 protein mll2411 (148 aa).

The protein belongs to the UPF0260 family.

The polypeptide is UPF0260 protein mll2411 (Mesorhizobium japonicum (strain LMG 29417 / CECT 9101 / MAFF 303099) (Mesorhizobium loti (strain MAFF 303099))).